A 170-amino-acid polypeptide reads, in one-letter code: NADPH-dependent 7-cyano-7-deazaguanine reductase (170 aa).

Cysteine 58 acts as the Thioimide intermediate in catalysis. Residue aspartate 65 is the Proton donor of the active site. Substrate contacts are provided by residues 80-82 and 99-100; these read VES and HE.

It belongs to the GTP cyclohydrolase I family. QueF type 1 subfamily.

Its subcellular location is the cytoplasm. The enzyme catalyses 7-aminomethyl-7-carbaguanine + 2 NADP(+) = 7-cyano-7-deazaguanine + 2 NADPH + 3 H(+). The protein operates within tRNA modification; tRNA-queuosine biosynthesis. Its function is as follows. Catalyzes the NADPH-dependent reduction of 7-cyano-7-deazaguanine (preQ0) to 7-aminomethyl-7-deazaguanine (preQ1). In Bdellovibrio bacteriovorus (strain ATCC 15356 / DSM 50701 / NCIMB 9529 / HD100), this protein is NADPH-dependent 7-cyano-7-deazaguanine reductase.